Here is a 273-residue protein sequence, read N- to C-terminus: Dermonecrotic toxin SdSicTox-betaIIB1bxi (273 aa).

Residue His-4 is part of the active site. Glu-24 and Asp-26 together coordinate Mg(2+). His-40 functions as the Nucleophile in the catalytic mechanism. 2 cysteine pairs are disulfide-bonded: Cys-44–Cys-50 and Cys-46–Cys-189. Asp-84 serves as a coordination point for Mg(2+).

The protein belongs to the arthropod phospholipase D family. Class II subfamily. The cofactor is Mg(2+). In terms of tissue distribution, expressed by the venom gland.

It is found in the secreted. The catalysed reaction is an N-(acyl)-sphingosylphosphocholine = an N-(acyl)-sphingosyl-1,3-cyclic phosphate + choline. It carries out the reaction an N-(acyl)-sphingosylphosphoethanolamine = an N-(acyl)-sphingosyl-1,3-cyclic phosphate + ethanolamine. It catalyses the reaction a 1-acyl-sn-glycero-3-phosphocholine = a 1-acyl-sn-glycero-2,3-cyclic phosphate + choline. The enzyme catalyses a 1-acyl-sn-glycero-3-phosphoethanolamine = a 1-acyl-sn-glycero-2,3-cyclic phosphate + ethanolamine. Dermonecrotic toxins cleave the phosphodiester linkage between the phosphate and headgroup of certain phospholipids (sphingolipid and lysolipid substrates), forming an alcohol (often choline) and a cyclic phosphate. This toxin acts on sphingomyelin (SM). It may also act on ceramide phosphoethanolamine (CPE), lysophosphatidylcholine (LPC) and lysophosphatidylethanolamine (LPE), but not on lysophosphatidylserine (LPS), and lysophosphatidylglycerol (LPG). It acts by transphosphatidylation, releasing exclusively cyclic phosphate products as second products. Induces dermonecrosis, hemolysis, increased vascular permeability, edema, inflammatory response, and platelet aggregation. The chain is Dermonecrotic toxin SdSicTox-betaIIB1bxi from Sicarius cf. damarensis (strain GJB-2008) (Six-eyed sand spider).